We begin with the raw amino-acid sequence, 336 residues long: Phospho-N-acetylmuramoyl-pentapeptide-transferase (336 aa).

Helical transmembrane passes span 3–23 (LSIMAGVIAFVLTVIAIPRFI), 52–72 (MGGTVFLIVALLVSLIFSIIL), 79–99 (NLGATFGILSVVLIYGIIGFL), 123–143 (LIAGLIFYFVHVLPSGTSAIN), 144–164 (IFGFYLEVGYLYAFFVLFWVV), 175–195 (GIDGLASISVVISLITYGIIA), 201–221 (FDILLIIVIMIGALLGFFVFN), 227–247 (VFMGDVGSLALGAMLAAISIA), 255–275 (LFIGFVYVFETSSVMLQVAYF), and 315–335 (VDAFLWAIGIFMSAITLAILY).

This sequence belongs to the glycosyltransferase 4 family. MraY subfamily. Requires Mg(2+) as cofactor.

It localises to the cell membrane. It catalyses the reaction UDP-N-acetyl-alpha-D-muramoyl-L-alanyl-gamma-D-glutamyl-L-lysyl-D-alanyl-D-alanine + di-trans,octa-cis-undecaprenyl phosphate = Mur2Ac(oyl-L-Ala-gamma-D-Glu-L-Lys-D-Ala-D-Ala)-di-trans,octa-cis-undecaprenyl diphosphate + UMP. Its pathway is cell wall biogenesis; peptidoglycan biosynthesis. In terms of biological role, catalyzes the initial step of the lipid cycle reactions in the biosynthesis of the cell wall peptidoglycan: transfers peptidoglycan precursor phospho-MurNAc-pentapeptide from UDP-MurNAc-pentapeptide onto the lipid carrier undecaprenyl phosphate, yielding undecaprenyl-pyrophosphoryl-MurNAc-pentapeptide, known as lipid I. The chain is Phospho-N-acetylmuramoyl-pentapeptide-transferase from Streptococcus agalactiae serotype Ia (strain ATCC 27591 / A909 / CDC SS700).